A 297-amino-acid chain; its full sequence is Aspartate carbamoyltransferase catalytic subunit (297 aa).

The carbamoyl phosphate site is built by arginine 48 and threonine 49. Position 76 (lysine 76) interacts with L-aspartate. The carbamoyl phosphate site is built by arginine 98, histidine 129, and glutamine 132. 2 residues coordinate L-aspartate: arginine 162 and arginine 214. Residues alanine 257 and proline 258 each contribute to the carbamoyl phosphate site.

The protein belongs to the aspartate/ornithine carbamoyltransferase superfamily. ATCase family. As to quaternary structure, heterododecamer (2C3:3R2) of six catalytic PyrB chains organized as two trimers (C3), and six regulatory PyrI chains organized as three dimers (R2).

The catalysed reaction is carbamoyl phosphate + L-aspartate = N-carbamoyl-L-aspartate + phosphate + H(+). It functions in the pathway pyrimidine metabolism; UMP biosynthesis via de novo pathway; (S)-dihydroorotate from bicarbonate: step 2/3. Catalyzes the condensation of carbamoyl phosphate and aspartate to form carbamoyl aspartate and inorganic phosphate, the committed step in the de novo pyrimidine nucleotide biosynthesis pathway. This Leuconostoc mesenteroides subsp. mesenteroides (strain ATCC 8293 / DSM 20343 / BCRC 11652 / CCM 1803 / JCM 6124 / NCDO 523 / NBRC 100496 / NCIMB 8023 / NCTC 12954 / NRRL B-1118 / 37Y) protein is Aspartate carbamoyltransferase catalytic subunit.